The primary structure comprises 280 residues: MITEFIDGLQQFHFLQNALITAIAIGIVAGAVGCFIILRGMSLMGDAISHAVLPGVALSFILGINFFIGAIVFGLLASILITYIKSNSIIKSDTAIGITFSSFLALGVILIGVAKSSTDLFHILFGNILAVQDQDMWMTIGVGVTVLLVICLLFRPLLLTSFDPVLAQSMGVRVKIYHYLLMVLLTLVSVTAMQSVGTILIVAMLITPAATAYLYANSLWSMMLLSSSLGALASILGLFIGYSLNIAVGSCIVLTSAVFFLISFFIAPKQRKNKHALSSH.

The next 8 helical transmembrane spans lie at 18 to 38 (ALITAIAIGIVAGAVGCFIIL), 61 to 81 (ILGINFFIGAIVFGLLASILI), 94 to 114 (TAIGITFSSFLALGVILIGVA), 139 to 159 (TIGVGVTVLLVICLLFRPLLL), 174 to 194 (VKIYHYLLMVLLTLVSVTAMQ), 196 to 216 (VGTILIVAMLITPAATAYLYA), 222 to 242 (MMLLSSSLGALASILGLFIGY), and 246 to 266 (IAVGSCIVLTSAVFFLISFFI).

Belongs to the ABC-3 integral membrane protein family.

Its subcellular location is the cell membrane. In terms of biological role, part of an ABC transporter complex involved in manganese import. This is Manganese import system permease protein ScaB from Streptococcus parasanguinis.